We begin with the raw amino-acid sequence, 559 residues long: MRLLTLALLVAGSLAYKFEDCEQKPAALNQVLRVGAKLYSYNLDFFYQKALPYNAIYAFTDVFLQTNLTNADQYQFYQGTNCTTVQQLYDNDNRYFGILRKAALLRSHQLNPFNDTIVGVSTTEPYEISVLIWKVNYFRVGVYVGAIVLFLLASKLVRNVVFYYTSGCSFGLLASLLLVAFIVWRVAPKKTIGVPILIGGWSVSLYMLHFAWSNLQSIMIEYQKYVIGYFATVLLISMAVCYKRGPPTDARSHDIAQWTLQLVALALIYFSVQMVEVSTGTIGALIIQQICRGFLFAGIRWYFVGLKAVWRKFFPARRRLLNEEEYEEQAEKTTKEQLAQLREYCKKEGNRPWKIAGNVRSARRLARFIEGEDDHITEDEIYAHELTGDVLDDEDYDFNEDYGLRTPNESHFDLEDDEDGAEEWDEVVVRRRASEYGRDSVQSVRVPRSVSSRLLSPYQGQNHMNRSLGPGIGFRRDSTPRHGNFQSEHRPRMPRTEQIYRSRRVEYDVKNGRVEGPSSSTASGMTPSEYMRKARRIDATSKTPTRKSRHPTESEDADE.

A signal peptide spans 1 to 15; the sequence is MRLLTLALLVAGSLA. N67, N81, and N114 each carry an N-linked (GlcNAc...) asparagine glycan. A run of 5 helical transmembrane segments spans residues 164-184, 192-212, 218-238, 267-287, and 290-310; these read YTSG…FIVW, IGVP…HFAW, IMIE…LISM, LIYF…ALII, and ICRG…KAVW. N408 and N465 each carry an N-linked (GlcNAc...) asparagine glycan. Disordered stretches follow at residues 475–494 and 510–559; these read RRDS…PRMP and KNGR…DADE. Positions 517 to 526 are enriched in polar residues; sequence PSSSTASGMT. Basic and acidic residues predominate over residues 530 to 539; sequence YMRKARRIDA.

This sequence belongs to the NEMP family.

It is found in the nucleus inner membrane. Contributes to nuclear envelope stiffness in germ cells. Required for fertility. This is Nuclear envelope integral membrane protein from Caenorhabditis elegans.